The chain runs to 1260 residues: MTQENNNSTNLKTVIIPFHEFIANELGNNCIKPNDEILTVLLKREEWEGHEDGGETPTELSDRVKNWQPYDARKDRQQLTRVEQIQYQLKYGVKSLQLILGQAFYRISLVNAIMHRQYEQGVKVTSRGRAKNILGVVKWNATYWPQYLKYYGFSGILNYCLTVLDYRRVFQLSVFTIAMGAGIMRFGLAQKLTKTQPTYVISAEKFSVQPKSKSEQNLLMEKVFGKKLPKALENPIVLYVEPLGLTNIQLRDEGTKEITNYPFIGLTPETLTTHRSARPMVPTYEGLEKFDADYLKAIRAASYLIDQETLKNVIDTGTVSKNSIHSPNFFEKVDLNFFEYEEFDEKTDNNQSSVQELSQFFNPKMIRTLSTEGISLGTQPDWKMAGPKLQTNTLAVNDVYPLIDKYWSESKADQIHKTSADFQLENSVGKLTSAAYRTESEFDFNDLEDFDGLEVDEWDDFYFDRKSFRAKTAERENEKFNEFLMQTSMDELGLYKNGFPSLELKRINENLTKEQFKDLELIGGLLPSIFTWYAFYTLYQFRLNYIYNVRKKPEPILYTRLDHFGRLQNKVKLNEVVGIDGGGEAFDKLFSALQRARGMGLYLPTVLLTIWESSLSPLIPGELDNWLLTQRNKVRMNFIKHTTSKVDFLMPEVTLAQKMLSDPDKTSGYESRFHFLTHAVDSAINKMDAFEKSNSKMLSNLELTLQESKTKMSKIRHLQGLLPIMKVKELFKVTLKLLQLIENELSHSPVISALKPGRYGLNTLPKGMLLVGDPGNGRSFLARAIASESRLPVFKTESTRFLDVKFGVMRLMSLFRRVRDQAPGILFIRDIDLITIDRERTNSPELIQLTTQFLICFDGYYIGSEARPTQRKIFTLGSVSDITRMDPACLRSGRFEWVVNLRKPILGERKFLLLQKASQSPVQIDATIAWNYFGLMSEGFTNAEVVSIVNNSTLQAIRKNEFVHTNESLNEGLNSIFQLRWNQTVSKAADEGFFNELHLSEVINSNKLTVDYTMNEKERPFKTKCMHLLTTVKNWSPKNNPTEISSLRMQNIGMSIQTQPVDYSQELIVELLDFMAEGAFIRQLRRCSPANTFVTQTSYSGQLGERLNKTFLKGCLNYRMENTLALIENPTQGLKTLSGTISWEALNKTALKDLQQRTALFTSWYKSRMFCQLKPDQRSLTNRYGYNPNYQQTGSSSMNRFKDRIKARLRESTHQAHPLYAMSGSIRGTFGSRGYETRLQRPLTGPVTQMSQEFLNIQFK.

Its subcellular location is the plastid. It localises to the chloroplast. This is an uncharacterized protein from Ostreococcus tauri.